Here is a 243-residue protein sequence, read N- to C-terminus: Probable phosphatase CLD_1129 (243 aa).

Histidine 8, histidine 10, histidine 16, histidine 41, glutamate 74, histidine 102, histidine 132, aspartate 192, and histidine 194 together coordinate Zn(2+).

This sequence belongs to the PHP family. Zn(2+) serves as cofactor.

The protein is Probable phosphatase CLD_1129 of Clostridium botulinum (strain Okra / Type B1).